The sequence spans 217 residues: Adenylate kinase (217 aa).

Residue 10 to 15 participates in ATP binding; sequence GAGKGT. An NMP region spans residues 30–59; that stretch reads STGDMLRAAVKAGSPLGVKVKDIMASGQLV. Residues threonine 31, arginine 36, 57–59, 85–88, and glutamine 92 contribute to the AMP site; these read QLV and GFPR. Residues 122–159 are LID; that stretch reads GRRVHEASGRIYHVTHNPPKTEGVDDITGEPLVQRDDD. Residues arginine 123 and 132-133 each bind ATP; that span reads IY. 2 residues coordinate AMP: arginine 156 and arginine 167. Residue glycine 202 participates in ATP binding.

It belongs to the adenylate kinase family. As to quaternary structure, monomer.

The protein localises to the cytoplasm. It catalyses the reaction AMP + ATP = 2 ADP. The protein operates within purine metabolism; AMP biosynthesis via salvage pathway; AMP from ADP: step 1/1. Functionally, catalyzes the reversible transfer of the terminal phosphate group between ATP and AMP. Plays an important role in cellular energy homeostasis and in adenine nucleotide metabolism. The protein is Adenylate kinase of Teredinibacter turnerae (strain ATCC 39867 / T7901).